The chain runs to 279 residues: HTH-type transcriptional regulator HdfR (279 aa).

Positions 1–58 constitute an HTH lysR-type domain; that stretch reads MDTELLKTFLEVSRTRHFGRAAESLYLTQSAVSFRIRQLENQLGVNLFTRHRNNIRLT. Positions 18-37 form a DNA-binding region, H-T-H motif; sequence FGRAAESLYLTQSAVSFRIR.

It belongs to the LysR transcriptional regulatory family.

Its function is as follows. Negatively regulates the transcription of the flagellar master operon flhDC by binding to the upstream region of the operon. This Escherichia coli O17:K52:H18 (strain UMN026 / ExPEC) protein is HTH-type transcriptional regulator HdfR.